The following is a 420-amino-acid chain: MKWGVVAVLATLVVAASAKDYFKETFDGSWADRWTKSSWKVSDGSAGEFKLTAGKWYGDAEADKGIQTGPDSKFFAISAPLATVFDNTGKDTVVQFSVKHEQDLDCGGGYIKVVPATSEKQMGEFGGDTPYSIMFGPDICGYSTRKVHVILTYKGKNYLIKKDIKAETDQLTHVYTLVIKPDNTYQVLIDLKEVASGSLYEDWDMLPPKTIKDPKASKPEDWDEREEIADPEDKKPEGWDDIPATIADKDAKKPEDWDDEEDGTWEPPMIPNPEYKGEWKAKMIKNPAYKGIWVAPDIDNPDYVHDDKLYNFKDLKFVGFELWQVKSGSIFDNILVTDDLEAAKKFAEDTWGKHKDEEKAMFDKVKKEEDEKKAKDAPPPPVDAEAAEEEDDEYEDKEEPSGMGSIKIPKEEEESGHDEL.

The signal sequence occupies residues 1–18 (MKWGVVAVLATLVVAASA). Cys106 and Cys140 are oxidised to a cystine. An alpha-D-glucoside is bound by residues Tyr110, Lys112, Tyr131, and Asp138. A run of 7 repeats spans residues 194–205 (VASGSLYEDWDM), 213–224 (DPKASKPEDWDE), 230–241 (DPEDKKPEGWDD), 248–259 (DKDAKKPEDWDD), 263–273 (GTWEPPMIPNP), 277–287 (GEWKAKMIKNP), and 291–301 (GIWVAPDIDNP). Residues 194–259 (VASGSLYEDW…DAKKPEDWDD (66 aa)) form a 4 X approximate repeats region. Residues 210-220 (TIKDPKASKPE) show a composition bias toward basic and acidic residues. The interval 210-272 (TIKDPKASKP…GTWEPPMIPN (63 aa)) is disordered. A compositionally biased stretch (acidic residues) spans 221–230 (DWDEREEIAD). The segment at 263 to 301 (GTWEPPMIPNPEYKGEWKAKMIKNPAYKGIWVAPDIDNP) is 3 X approximate repeats. Residue Glu321 participates in an alpha-D-glucoside binding. Positions 357-376 (EEKAMFDKVKKEEDEKKAKD) are enriched in basic and acidic residues. The segment at 357-420 (EEKAMFDKVK…EEEESGHDEL (64 aa)) is disordered. 2 stretches are compositionally biased toward acidic residues: residues 385–398 (EAAEEEDDEYEDKE) and 411–420 (EEEESGHDEL). A Prevents secretion from ER motif is present at residues 417–420 (HDEL).

This sequence belongs to the calreticulin family.

Its subcellular location is the endoplasmic reticulum lumen. Its function is as follows. Molecular calcium-binding chaperone promoting folding, oligomeric assembly and quality control in the ER via the calreticulin/calnexin cycle. This lectin may interact transiently with almost all of the monoglucosylated glycoproteins that are synthesized in the ER. This chain is Calreticulin, found in Chlamydomonas reinhardtii (Chlamydomonas smithii).